Consider the following 173-residue polypeptide: Rubredoxin-2 (173 aa).

2 Rubredoxin-like domains span residues 2-53 and 119-170; these read ASYK…FMLI and YLKW…YVLY. Residues C6, C9, C39, C42, C124, C127, C157, and C160 each contribute to the Fe cation site.

It belongs to the rubredoxin family. It depends on Fe(3+) as a cofactor.

The protein resides in the cytoplasm. It functions in the pathway hydrocarbon metabolism; alkane degradation. Its function is as follows. Involved in the hydrocarbon hydroxylating system, which transfers electrons from NADH to rubredoxin reductase and then through rubredoxin to alkane 1 monooxygenase. The chain is Rubredoxin-2 (alkG) from Ectopseudomonas oleovorans (Pseudomonas oleovorans).